The chain runs to 407 residues: uncharacterized protein (407 aa).

The protein belongs to the peptidase U32 family.

This is an uncharacterized protein from Methanocaldococcus jannaschii (strain ATCC 43067 / DSM 2661 / JAL-1 / JCM 10045 / NBRC 100440) (Methanococcus jannaschii).